Consider the following 227-residue polypeptide: Small ribosomal subunit protein uS3 (227 aa).

The 69-residue stretch at 39 to 107 folds into the KH type-2 domain; the sequence is VRQLLQKRLK…PVHITIEEVR (69 aa).

It belongs to the universal ribosomal protein uS3 family. As to quaternary structure, part of the 30S ribosomal subunit. Forms a tight complex with proteins S10 and S14.

Its function is as follows. Binds the lower part of the 30S subunit head. Binds mRNA in the 70S ribosome, positioning it for translation. The polypeptide is Small ribosomal subunit protein uS3 (Coxiella burnetii (strain CbuK_Q154) (Coxiella burnetii (strain Q154))).